The chain runs to 478 residues: ATP-dependent RNA helicase DDX19A (478 aa).

Residue Ala2 is modified to N-acetylalanine. The N-terminal lobe stretch occupies residues Ala2–Glu299. Lys26 participates in a covalent cross-link: Glycyl lysine isopeptide (Lys-Gly) (interchain with G-Cter in SUMO1); alternate. Residue Lys26 forms a Glycyl lysine isopeptide (Lys-Gly) (interchain with G-Cter in SUMO2); alternate linkage. Residues Lys31–Arg55 are disordered. The N-terminal helix stretch occupies residues Asp54–Ser67. A Q motif motif is present at residues Lys91–Glu119. ATP-binding positions include Gln118 and Ser137–Thr144. A Helicase ATP-binding domain is found at Met124–Ile294. Residues Asp241–Asp244 carry the DEAD box motif. Residues Glu300 to Asn478 form a C-terminal lobe region. Positions Thr305–Ile473 constitute a Helicase C-terminal domain. Residues Arg428 and Arg431 each coordinate ATP.

The protein belongs to the DEAD box helicase family. DDX19/DBP5 subfamily.

Its subcellular location is the cytoplasm. The protein localises to the nucleus. It is found in the nucleoplasm. The catalysed reaction is ATP + H2O = ADP + phosphate + H(+). Its function is as follows. ATP-dependent RNA helicase involved in mRNA export from the nucleus. Rather than unwinding RNA duplexes, DDX19 functions as a remodeler of ribonucleoprotein particles, whereby proteins bound to nuclear mRNA are dissociated and replaced by cytoplasmic mRNA binding proteins. The protein is ATP-dependent RNA helicase DDX19A (DDX19A) of Bos taurus (Bovine).